A 602-amino-acid polypeptide reads, in one-letter code: mRNA-decapping enzyme 1A (602 aa).

Residue serine 82 is modified to Phosphoserine. The segment covering 152–161 (RSQQAARDKQ) has biased composition (basic and acidic residues). 3 disordered regions span residues 152–174 (RSQQ…DQRP), 191–234 (NQMG…PSGH), and 267–291 (GDAS…APQS). 3 positions are modified to phosphoserine: serine 162, serine 199, and serine 200. Residues 193–229 (MGGSNISSPGLQPSTQLSNLGSTETLEETPSGSQDKS) show a composition bias toward polar residues. A phosphoserine mark is found at serine 335 and serine 339. At threonine 367 the chain carries Phosphothreonine. Serine 372 carries the phosphoserine modification. Arginine 395 carries the post-translational modification Asymmetric dimethylarginine. At threonine 420 the chain carries Phosphothreonine. 4 positions are modified to phosphoserine: serine 441, serine 542, serine 543, and serine 545. 2 positions are modified to phosphothreonine: threonine 548 and threonine 551.

The protein belongs to the DCP1 family. As to quaternary structure, forms a complex with EDC3, DCP2, DDX6 and EDC4/HEDLS, within this complex directly interacts with EDC3. Part of a cytoplasmic complex containing proteins involved in mRNA decay, including XRN1 and LSM1. Interacts with DCP1B. Interacts with DCP2. Interacts with DDX17 in an RNA-independent manner. Interacts with PNRC2. Interacts with SMAD4. Interacts with UPF1. Interacts with ZC3HAV1. Interacts with ZFP36L1. Interacts with NBDY. Interacts with DHX34; the interaction is RNA-independent. As to expression, ubiquitous, with highest expression in the spleen and testis (at protein level).

Its subcellular location is the cytoplasm. The protein resides in the P-body. It localises to the nucleus. The enzyme catalyses a 5'-end (N(7)-methyl 5'-triphosphoguanosine)-ribonucleoside in mRNA + H2O = N(7)-methyl-GDP + a 5'-end phospho-ribonucleoside in mRNA + 2 H(+). Its function is as follows. Necessary for the degradation of mRNAs, both in normal mRNA turnover and in nonsense-mediated mRNA decay. Removes the 7-methyl guanine cap structure from mRNA molecules, yielding a 5'-phosphorylated mRNA fragment and 7m-GDP. Contributes to the transactivation of target genes after stimulation by TGFB1. Essential for embryonic development. This Mus musculus (Mouse) protein is mRNA-decapping enzyme 1A (Dcp1a).